The primary structure comprises 988 residues: Exportin-T (988 aa).

The protein belongs to the exportin family.

It localises to the nucleus. The protein resides in the cytoplasm. Functionally, tRNA nucleus export receptor which facilitates tRNA translocation across the nuclear pore complex. Involved in pre-tRNA splicing, probably by affecting the interaction of pre-tRNA with splicing endonuclease. This is Exportin-T (LOS1) from Lodderomyces elongisporus (strain ATCC 11503 / CBS 2605 / JCM 1781 / NBRC 1676 / NRRL YB-4239) (Yeast).